A 316-amino-acid polypeptide reads, in one-letter code: Transcription initiation factor IIB (316 aa).

Residues 11-42 form a TFIIB-type zinc finger; it reads PRVTCPNHPDAILVEDYRAGDMICPECGLVVG. Positions 15, 18, 34, and 37 each coordinate Zn(2+). Phosphoserine occurs at positions 70, 76, and 92. Repeat copies occupy residues 124–200 and 218–294. Residues lysine 152, arginine 154, lysine 189, and lysine 196 each contribute to the DNA site. The core promoter DNA-binding stretch occupies residues 189-193; that stretch reads KEIGR. N6-acetyllysine; by autocatalysis is present on lysine 238. Positions 244 to 316 are necessary for TATA box-bound complex TBP formation; the sequence is LVPGRSPISV…DTPVDKLPQL (73 aa). Arginine 248 provides a ligand contact to DNA. The segment at 249–252 is core promoter DNA-binding; that stretch reads SPIS. Lysine 272, alanine 281, threonine 284, arginine 286, and arginine 290 together coordinate DNA. The tract at residues 283–286 is core promoter DNA-binding; that stretch reads VTIR.

This sequence belongs to the TFIIB family. As to quaternary structure, found in a ternary complex with TATA box-bound TBP. Part of a TFIID-containing RNA polymerase II pre-initiation complex (PIC) that is composed of TBP and at least GTF2A1, GTF2A2, GTF2E1, GTF2E2, GTF2F1, GTF2H2, GTF2H3, GTF2H4, GTF2H5, GTF2B, TCEA1, ERCC2, ERCC3, TAF1, TAF2, TAF3, TAF4, TAF5, TAF6, TAF7, TAF8, TAF9, TAF10, TAF11, TAF12 and TAF13. Associates with TFIID-TFIIA (DA complex) to form TFIID-TFIIA-TFIIB (DAB complex), which is then recognized by RNA polymerase II (Pol II). Found in a RNA polymerase II initiation complex. Interacts (via C-terminus) with TBP; this interaction with TATA box-bound TBP guides Pol II into the PIC. Interacts (via N-terminus) with Pol II. Interacts (via C-terminus) with SSU72; this interaction is inhibited by SYMPK. Interacts with NR2F1; this interaction is direct. Interacts with PGR. Interacts with ESR1. Interacts with GTF2F1 (via C-terminus and preferentially via acetylated form); this interaction prevents binding of GTF2B to GTF2F2. Interacts with GTF2F2 (via N-terminus); this interaction is inhibited in presence of GTF2F1. Interacts with the transcription elongation factor TCEA2. Interacts with HSF1 (via transactivation domain). Interacts with GPBP1. In terms of processing, acetylated. Autoacetylated; autoacetylation at Lys-238 stimulates transcription activation.

It localises to the nucleus. It is found in the chromosome. The catalysed reaction is L-lysyl-[protein] + acetyl-CoA = N(6)-acetyl-L-lysyl-[protein] + CoA + H(+). Its function is as follows. General transcription factor that plays a role in transcription initiation by RNA polymerase II (Pol II). Involved in the pre-initiation complex (PIC) formation and Pol II recruitment at promoter DNA. Together with the TATA box-bound TBP forms the core initiation complex and provides a bridge between TBP and the Pol II-TFIIF complex. Released from the PIC early following the onset of transcription during the initiation and elongation transition and reassociates with TBP during the next transcription cycle. Associates with chromatin to core promoter-specific regions. Binds to two distinct DNA core promoter consensus sequence elements in a TBP-independent manner; these IIB-recognition elements (BREs) are localized immediately upstream (BREu), 5'-[GC][GC][GA]CGCC-3', and downstream (BREd), 5'-[GA]T[TGA][TG][GT][TG][TG]-3', of the TATA box element. Modulates transcription start site selection. Also exhibits autoacetyltransferase activity that contributes to the activated transcription. This is Transcription initiation factor IIB from Pongo abelii (Sumatran orangutan).